The chain runs to 389 residues: Liposome tubulation protein MamY (389 aa).

Over 1-31 (MAIAAIMGDVLMLMGFNKAAFGKLNSASRAA) the chain is Cytoplasmic. Residues 32–52 (LIGAVIWAVLSIVYLTIFNGW) traverse the membrane as a helical segment. Topologically, residues 53-62 (KNLFTMLPHE) are lumenal. Residues 63 to 83 (FFIVLLSIALPIGLTVLILML) traverse the membrane as a helical segment. Topologically, residues 84–389 (SRIVKSVDTL…TETAPDSGMD (306 aa)) are cytoplasmic.

Belongs to the magnetosome MamY family.

It localises to the magnetosome membrane. Its function is as follows. Causes tubulation when added to magnetosome-derived liposomes, binds liposomes; may be involved in constriction of the cell inner membrane to form mature magnetosomes. Binds preferentially to cardiolipin, a component of bacterial membranes, with very poor to no binding of other tested (phospho)lipids. Addition of cardiolipin to magnetosome-derived lipids increases tubulation. May function with MamX, MamZ amd Mms6. This Paramagnetospirillum magneticum (strain ATCC 700264 / AMB-1) (Magnetospirillum magneticum) protein is Liposome tubulation protein MamY.